Here is a 227-residue protein sequence, read N- to C-terminus: Cytochrome c oxidase subunit 2 (227 aa).

Over 1 to 14 (MAYPFELGFQDATS) the chain is Mitochondrial intermembrane. Residues 15-45 (PIMEELLHFHDHTLMIVFLISSLVLYIISLM) traverse the membrane as a helical segment. The Mitochondrial matrix segment spans residues 46–59 (LTTKLTHTSTMDAQ). A helical transmembrane segment spans residues 60 to 87 (EVETIWTILPAIILILIALPSLRVLYMM). Over 88–227 (DEINDPSLTV…HFENWSSSML (140 aa)) the chain is Mitochondrial intermembrane. Residues H161, C196, E198, C200, H204, and M207 each coordinate Cu cation. Position 198 (E198) interacts with Mg(2+).

It belongs to the cytochrome c oxidase subunit 2 family. As to quaternary structure, component of the cytochrome c oxidase (complex IV, CIV), a multisubunit enzyme composed of 14 subunits. The complex is composed of a catalytic core of 3 subunits MT-CO1, MT-CO2 and MT-CO3, encoded in the mitochondrial DNA, and 11 supernumerary subunits COX4I, COX5A, COX5B, COX6A, COX6B, COX6C, COX7A, COX7B, COX7C, COX8 and NDUFA4, which are encoded in the nuclear genome. The complex exists as a monomer or a dimer and forms supercomplexes (SCs) in the inner mitochondrial membrane with NADH-ubiquinone oxidoreductase (complex I, CI) and ubiquinol-cytochrome c oxidoreductase (cytochrome b-c1 complex, complex III, CIII), resulting in different assemblies (supercomplex SCI(1)III(2)IV(1) and megacomplex MCI(2)III(2)IV(2)). Found in a complex with TMEM177, COA6, COX18, COX20, SCO1 and SCO2. Interacts with TMEM177 in a COX20-dependent manner. Interacts with COX20. Interacts with COX16. Cu cation is required as a cofactor.

The protein localises to the mitochondrion inner membrane. It catalyses the reaction 4 Fe(II)-[cytochrome c] + O2 + 8 H(+)(in) = 4 Fe(III)-[cytochrome c] + 2 H2O + 4 H(+)(out). Functionally, component of the cytochrome c oxidase, the last enzyme in the mitochondrial electron transport chain which drives oxidative phosphorylation. The respiratory chain contains 3 multisubunit complexes succinate dehydrogenase (complex II, CII), ubiquinol-cytochrome c oxidoreductase (cytochrome b-c1 complex, complex III, CIII) and cytochrome c oxidase (complex IV, CIV), that cooperate to transfer electrons derived from NADH and succinate to molecular oxygen, creating an electrochemical gradient over the inner membrane that drives transmembrane transport and the ATP synthase. Cytochrome c oxidase is the component of the respiratory chain that catalyzes the reduction of oxygen to water. Electrons originating from reduced cytochrome c in the intermembrane space (IMS) are transferred via the dinuclear copper A center (CU(A)) of subunit 2 and heme A of subunit 1 to the active site in subunit 1, a binuclear center (BNC) formed by heme A3 and copper B (CU(B)). The BNC reduces molecular oxygen to 2 water molecules using 4 electrons from cytochrome c in the IMS and 4 protons from the mitochondrial matrix. This Sciurus carolinensis (Eastern gray squirrel) protein is Cytochrome c oxidase subunit 2 (MT-CO2).